The sequence spans 185 residues: Protein GrpE (185 aa).

Positions 1–20 are enriched in basic and acidic residues; it reads MSQEKKEELQSEAQVTKEET. The interval 1 to 28 is disordered; the sequence is MSQEKKEELQSEAQVTKEETPQANEAAA.

The protein belongs to the GrpE family. As to quaternary structure, homodimer.

The protein localises to the cytoplasm. In terms of biological role, participates actively in the response to hyperosmotic and heat shock by preventing the aggregation of stress-denatured proteins, in association with DnaK and GrpE. It is the nucleotide exchange factor for DnaK and may function as a thermosensor. Unfolded proteins bind initially to DnaJ; upon interaction with the DnaJ-bound protein, DnaK hydrolyzes its bound ATP, resulting in the formation of a stable complex. GrpE releases ADP from DnaK; ATP binding to DnaK triggers the release of the substrate protein, thus completing the reaction cycle. Several rounds of ATP-dependent interactions between DnaJ, DnaK and GrpE are required for fully efficient folding. This is Protein GrpE from Sulfurimonas denitrificans (strain ATCC 33889 / DSM 1251) (Thiomicrospira denitrificans (strain ATCC 33889 / DSM 1251)).